Consider the following 369-residue polypeptide: Aspartate-semialdehyde dehydrogenase (369 aa).

NADP(+)-binding positions include 11–14, 38–39, and glutamine 75; these read RGMV and TS. Arginine 104 lines the phosphate pocket. Catalysis depends on cysteine 137, which acts as the Acyl-thioester intermediate. Glutamine 164 contributes to the substrate binding site. NADP(+) contacts are provided by residues 167 to 168 and proline 195; that span reads SG. Substrate is bound at residue glutamate 243. Lysine 246 is a binding site for phosphate. Position 269 (arginine 269) interacts with substrate. Histidine 276 acts as the Proton acceptor in catalysis. Glutamine 352 serves as a coordination point for NADP(+).

This sequence belongs to the aspartate-semialdehyde dehydrogenase family. As to quaternary structure, homodimer.

The catalysed reaction is L-aspartate 4-semialdehyde + phosphate + NADP(+) = 4-phospho-L-aspartate + NADPH + H(+). It participates in amino-acid biosynthesis; L-lysine biosynthesis via DAP pathway; (S)-tetrahydrodipicolinate from L-aspartate: step 2/4. Its pathway is amino-acid biosynthesis; L-methionine biosynthesis via de novo pathway; L-homoserine from L-aspartate: step 2/3. It functions in the pathway amino-acid biosynthesis; L-threonine biosynthesis; L-threonine from L-aspartate: step 2/5. In terms of biological role, catalyzes the NADPH-dependent formation of L-aspartate-semialdehyde (L-ASA) by the reductive dephosphorylation of L-aspartyl-4-phosphate. In Buchnera aphidicola subsp. Baizongia pistaciae (strain Bp), this protein is Aspartate-semialdehyde dehydrogenase.